Here is a 170-residue protein sequence, read N- to C-terminus: Myosin regulatory light chain 2, skeletal muscle isoform (170 aa).

N,N,N-trimethylalanine is present on Ala2. Ser16 and Ser17 each carry phosphoserine. Thr26 and Thr36 each carry phosphothreonine. In terms of domain architecture, EF-hand 1 spans 26–61 (TQIQEFKEAFTVIDQNRDGIIDKEDLRDTFAAMGRL). Ca(2+)-binding residues include Asp39, Asn41, Asp43, and Asp50. Ser76 is subject to Phosphoserine. EF-hand domains follow at residues 96-131 (DPEDVITGAFKVLDPEGKGTIKKKFLEELLTTQCDR) and 132-167 (FSQEEIKNMWAAFPPDVGGNVDYKNICYVITHGDAK). Thr102 is subject to Phosphothreonine.

As to quaternary structure, myosin is a hexamer of 2 heavy chains and 4 light chains.

Functionally, plays a role in muscle contraction. In Bos taurus (Bovine), this protein is Myosin regulatory light chain 2, skeletal muscle isoform.